A 212-amino-acid chain; its full sequence is Thymidylate kinase (212 aa).

10 to 17 (GLEGAGKT) is an ATP binding site.

Belongs to the thymidylate kinase family.

The enzyme catalyses dTMP + ATP = dTDP + ADP. Its function is as follows. Phosphorylation of dTMP to form dTDP in both de novo and salvage pathways of dTTP synthesis. This chain is Thymidylate kinase, found in Yersinia pestis bv. Antiqua (strain Antiqua).